The sequence spans 571 residues: PR domain zinc finger protein 14 (571 aa).

A Phosphoserine modification is found at Ser79. The segment at 129-191 (LGHQIIGGDN…PKPSNQEGKS (63 aa)) is disordered. Polar residues predominate over residues 165 to 176 (RTSQLLPCSPSK). Residues 194–384 (RFQFTEEDLH…DIPVSLQVTE (191 aa)) form an interaction with CBFA2T2 region. Positions 251–367 (EGLCLMQTVF…QNQELLVWYG (117 aa)) constitute an SET domain. The C2H2-type 1; atypical zinc-finger motif lies at 400-424 (YRCERCGKVFTYKYYRDKHLKYTPC). 5 consecutive C2H2-type zinc fingers follow at residues 432–455 (FPCS…LHVH), 461–483 (HKCS…MRVH), 489–511 (YQCV…IRQH), 517–540 (FKCK…RRSH), and 546–568 (CSCS…MKFH).

Belongs to the class V-like SAM-binding methyltransferase superfamily. Interacts with CBFA2T2. As to expression, expressed in embryonic stem cells. Tends to be overexpressed in breast cancer (at protein level).

The protein localises to the nucleus. In terms of biological role, transcription factor that has both positive and negative roles on transcription. Required for the maintenance of embryonic stem cell identity and the reacquisition of pluripotency in somatic cells. May play an essential role in germ cell development at 2 levels: the reacquisition of potential pluripotency, including SOX2 up-regulation, and successful epigenetic reprogramming, characterized by EHMT1 repression. Its association with CBFA2T2 is required for the functions in pluripotency and germ cell formation. Directly up-regulates the expression of pluripotency gene POU5F1 through its proximal enhancer. Binds to the DNA consensus sequence 5'-GGTC[TC]CTAA-3'. This is PR domain zinc finger protein 14 (PRDM14) from Homo sapiens (Human).